A 230-amino-acid chain; its full sequence is Mitochondrial fission factor homolog B (230 aa).

At methionine 1 to methionine 210 the chain is on the cytoplasmic side. Positions glutamate 117–leucine 153 are disordered. Phosphoserine is present on serine 142. Positions valine 179–methionine 210 form a coiled coil. A helical; Anchor for type IV membrane protein membrane pass occupies residues valine 211 to phenylalanine 228. At arginine 229–arginine 230 the chain is on the extracellular side.

It belongs to the Tango11 family.

The protein resides in the mitochondrion outer membrane. The protein localises to the peroxisome. Its function is as follows. Plays a role in mitochondrial and peroxisomal fission. Promotes the recruitment and association of the fission mediator dynamin-related protein 1 (DNM1L) to the mitochondrial surface. The protein is Mitochondrial fission factor homolog B of Danio rerio (Zebrafish).